A 185-amino-acid polypeptide reads, in one-letter code: Ribosome-recycling factor (185 aa).

This sequence belongs to the RRF family.

It localises to the cytoplasm. Functionally, responsible for the release of ribosomes from messenger RNA at the termination of protein biosynthesis. May increase the efficiency of translation by recycling ribosomes from one round of translation to another. This chain is Ribosome-recycling factor, found in Dehalococcoides mccartyi (strain ATCC BAA-2266 / KCTC 15142 / 195) (Dehalococcoides ethenogenes (strain 195)).